The following is a 758-amino-acid chain: 5-methyltetrahydropteroyltriglutamate--homocysteine methyltransferase (758 aa).

5-methyltetrahydropteroyltri-L-glutamate is bound by residues 16–19 (RELK) and Lys116. L-homocysteine is bound by residues 436 to 438 (IGS) and Glu489. L-methionine-binding positions include 436-438 (IGS) and Glu489. 5-methyltetrahydropteroyltri-L-glutamate is bound by residues 520-521 (RC) and Trp566. Residue Asp604 participates in L-homocysteine binding. Position 604 (Asp604) interacts with L-methionine. Glu610 serves as a coordination point for 5-methyltetrahydropteroyltri-L-glutamate. Zn(2+) is bound by residues His646, Cys648, and Glu670. His699 acts as the Proton donor in catalysis. A Zn(2+)-binding site is contributed by Cys731.

Belongs to the vitamin-B12 independent methionine synthase family. The cofactor is Zn(2+).

The catalysed reaction is 5-methyltetrahydropteroyltri-L-glutamate + L-homocysteine = tetrahydropteroyltri-L-glutamate + L-methionine. It functions in the pathway amino-acid biosynthesis; L-methionine biosynthesis via de novo pathway; L-methionine from L-homocysteine (MetE route): step 1/1. Its function is as follows. Catalyzes the transfer of a methyl group from 5-methyltetrahydrofolate to homocysteine resulting in methionine formation. The polypeptide is 5-methyltetrahydropteroyltriglutamate--homocysteine methyltransferase (Xylella fastidiosa (strain 9a5c)).